A 139-amino-acid chain; its full sequence is D-ribose pyranase (139 aa).

H20 serves as the catalytic Proton donor. Substrate-binding positions include D28, H106, and 128-130 (YAN).

This sequence belongs to the RbsD / FucU family. RbsD subfamily. In terms of assembly, homodecamer.

The protein resides in the cytoplasm. It carries out the reaction beta-D-ribopyranose = beta-D-ribofuranose. Its pathway is carbohydrate metabolism; D-ribose degradation; D-ribose 5-phosphate from beta-D-ribopyranose: step 1/2. Catalyzes the interconversion of beta-pyran and beta-furan forms of D-ribose. This chain is D-ribose pyranase, found in Escherichia coli O127:H6 (strain E2348/69 / EPEC).